A 524-amino-acid chain; its full sequence is Solute carrier family 40 member 1 (524 aa).

The span at 1 to 18 (MENETELRVVHQEEQQRE) shows a compositional bias: basic and acidic residues. Positions 1 to 30 (MENETELRVVHQEEQQREEGEDESQPQNPP) are disordered. 11 helical membrane-spanning segments follow: residues 70-92 (SLLL…GPIV), 109-129 (LLFQ…LLLV), 137-157 (LPVF…GVLS), 191-211 (GIDL…ISFV), 218-238 (ITFA…FISV), 314-334 (VVLP…FGTL), 347-367 (YIIG…TLVY), 380-400 (GLWS…SIWV), 409-429 (MLMA…LAVI), 446-466 (GVQN…GIIV), and 472-492 (FWIL…LYTI).

Belongs to the ferroportin (FP) (TC 2.A.100) family. SLC40A subfamily.

The protein localises to the membrane. May be involved in iron transport and iron homeostasis. The sequence is that of Solute carrier family 40 member 1 (IREG1) from Arabidopsis thaliana (Mouse-ear cress).